Consider the following 91-residue polypeptide: Putative pterin-4-alpha-carbinolamine dehydratase (91 aa).

It belongs to the pterin-4-alpha-carbinolamine dehydratase family.

It carries out the reaction (4aS,6R)-4a-hydroxy-L-erythro-5,6,7,8-tetrahydrobiopterin = (6R)-L-erythro-6,7-dihydrobiopterin + H2O. This Sulfolobus acidocaldarius (strain ATCC 33909 / DSM 639 / JCM 8929 / NBRC 15157 / NCIMB 11770) protein is Putative pterin-4-alpha-carbinolamine dehydratase.